Reading from the N-terminus, the 1062-residue chain is Platelet-derived growth factor receptor alpha (1062 aa).

The signal sequence occupies residues 1–27 (MFPPSSAPLLLPQLEELVVPLHTAFTL). Ig-like C2-type domains are found at residues 28 to 96 (TCQG…VYVP), 91 to 184 (IYVY…VHGW), 190 to 281 (LHVE…KQIA), 287 to 381 (SEFM…RTVS), and 389 to 493 (PAVI…IKLV). At 28 to 504 (TCQGEATIAW…NGPHPELTVA (477 aa)) the chain is on the extracellular side. Cysteine 29 and cysteine 74 are disulfide-bonded. Residues asparagine 79 and asparagine 132 are each glycosylated (N-linked (GlcNAc...) asparagine). Disulfide bonds link cysteine 124-cysteine 165 and cysteine 211-cysteine 265. Residues asparagine 273, asparagine 333, asparagine 366, asparagine 433, and asparagine 444 are each glycosylated (N-linked (GlcNAc...) asparagine). Cysteine 410 and cysteine 477 form a disulfide bridge. Residues 505–525 (AAVLVLLVIVIISLIVLVVIW) traverse the membrane as a helical segment. The Cytoplasmic portion of the chain corresponds to 526–1062 (KQKPRYEIRW…CSDLVEDSFL (537 aa)). Phosphotyrosine; by autocatalysis occurs at positions 548 and 550. Residues 569–945 (LVLGRILGSG…HYERVNHEFL (377 aa)) enclose the Protein kinase domain. Residues 575 to 583 (LGSGAFGKV) and lysine 603 each bind ATP. Tyrosine 697, tyrosine 708, tyrosine 719, tyrosine 731, and tyrosine 739 each carry phosphotyrosine; by autocatalysis. Residues 734–754 (LQGSNYDHPPSQKGSNDGEMD) form a disordered region. Aspartate 793 serves as the catalytic Proton acceptor. A phosphotyrosine; by autocatalysis mark is found at tyrosine 824 and tyrosine 963. Basic and acidic residues predominate over residues 975–986 (KDRESGFDEQRL). Residues 975 to 1034 (KDRESGFDEQRLSSDSGYIIPLPDLDPISDEEYGKRNRHSSQTSEESAIETGSSSSTFAK) are disordered. Tyrosine 992 is subject to Phosphotyrosine; by autocatalysis. Residues 1014–1032 (SSQTSEESAIETGSSSSTF) are compositionally biased toward polar residues.

This sequence belongs to the protein kinase superfamily. Tyr protein kinase family. CSF-1/PDGF receptor subfamily. Interacts with homodimeric pdgfa, pdgfb and pdgfc, and with heterodimers formed by pdgfa and pdgfb. monomer in the absence of bound ligand. Interaction with dimeric pdgfa, pdgfb and/or pdgfc leads to receptor dimerization, where both pdgfra homodimers and heterodimers with pdgfrb are observed. Ubiquitinated, leading to its degradation. Post-translationally, autophosphorylated on tyrosine residues upon ligand binding. Autophosphorylation occurs in trans, i.e. one subunit of the dimeric receptor phosphorylates tyrosine residues on the other subunit.

It localises to the cell membrane. It carries out the reaction L-tyrosyl-[protein] + ATP = O-phospho-L-tyrosyl-[protein] + ADP + H(+). Present in an inactive conformation in the absence of bound ligand. Binding of pdgfa and/or pdgfb leads to dimerization and activation by autophosphorylation on tyrosine residues. Tyrosine-protein kinase that acts as a cell-surface receptor for pdgfa, pdgfb and pdgfc and plays an essential role in the regulation of embryonic development, cell proliferation, survival and chemotaxis. Depending on the context, promotes or inhibits cell proliferation and cell migration. Plays an important role in the differentiation of bone marrow-derived mesenchymal stem cells. Required for normal skeleton development. Required for normal development of the gastrointestinal tract. Plays a role in cell migration and chemotaxis in wound healing. Plays a role in platelet activation, secretion of agonists from platelet granules, and in thrombin-induced platelet aggregation. Binding of its cognate ligands - homodimeric pdgfa, homodimeric pdgfb, heterodimers formed by pdgfa and pdgfb or homodimeric pdgfc -leads to the activation of several signaling cascades; the response depends on the nature of the bound ligand and is modulated by the formation of heterodimers between pdgfra and pdgfrb. Phosphorylates pik3r1, plcg1, and ptpn11. Activation of plcg1 leads to the production of the cellular signaling molecules diacylglycerol and inositol 1,4,5-trisphosphate, mobilization of cytosolic Ca(2+) and the activation of protein kinase C. Phosphorylates pik3r1, the regulatory subunit of phosphatidylinositol 3-kinase, and thereby mediates activation of the AKT1 signaling pathway. Mediates activation of hras and of the MAP kinases mapk1/erk2 and/or mapk3/erk1. Promotes activation of STAT family members stat1, stat3 and stat5a and/or stat5b. Receptor signaling is down-regulated by protein phosphatases that dephosphorylate the receptor and its down-stream effectors, and by rapid internalization of the activated receptor. This is Platelet-derived growth factor receptor alpha (pdgfra) from Takifugu rubripes (Japanese pufferfish).